The chain runs to 802 residues: Copper-exporting P-type ATPase (802 aa).

2 HMA domains span residues 5 to 70 (KKTT…YGVT) and 72 to 138 (ETVE…YDAS). 4 residues coordinate Cu(+): cysteine 16, cysteine 19, cysteine 83, and cysteine 86. Transmembrane regions (helical) follow at residues 161–181 (LIISAVLSLPLLMLMFVHLFN), 192–212 (WFQFILATPVQFIIGWQFYVG), 224–244 (MDVLVAVGTSAAYFYSIYEMV), 256–276 (LYFETSAVLLTLILFGKYLEA), 411–431 (YFVPIVVGIALLIFIVWITLV), and 438–458 (PALVASISVLVIACPCALGLA). The 4-aspartylphosphate intermediate role is filled by aspartate 495. Mg(2+) contacts are provided by aspartate 690 and aspartate 694. The next 2 helical transmembrane spans lie at 748-767 (LFWAFGYNIAGIPIAALGLL) and 771-790 (VAGAAMALSSVSVVTNALRL).

Belongs to the cation transport ATPase (P-type) (TC 3.A.3) family. Type IB subfamily.

It localises to the cell membrane. It carries out the reaction Cu(+)(in) + ATP + H2O = Cu(+)(out) + ADP + phosphate + H(+). Involved in copper export. This is Copper-exporting P-type ATPase (copA) from Staphylococcus aureus (strain N315).